The following is a 256-amino-acid chain: ATP synthase peripheral stalk subunit b, mitochondrial (256 aa).

A mitochondrion-targeting transit peptide spans 1-42 (MLSRVVLSAAATAASSLKNAAFLGPGVLQATRTFHTGQPHLA). N6-succinyllysine is present on Lys-131. N6-acetyllysine occurs at positions 139, 154, 162, 221, 233, and 244.

This sequence belongs to the eukaryotic ATPase B chain family. Component of the ATP synthase complex composed at least of ATP5F1A/subunit alpha, ATP5F1B/subunit beta, ATP5MC1/subunit c (homooctomer), MT-ATP6/subunit a, MT-ATP8/subunit 8, ATP5ME/subunit e, ATP5MF/subunit f, ATP5MG/subunit g, ATP5MK/subunit k, ATP5MJ/subunit j, ATP5F1C/subunit gamma, ATP5F1D/subunit delta, ATP5F1E/subunit epsilon, ATP5PF/subunit F6, ATP5PB/subunit b, ATP5PD/subunit d, ATP5PO/subunit OSCP. ATP synthase complex consists of a soluble F(1) head domain (subunits alpha(3) and beta(3)) - the catalytic core - and a membrane F(0) domain - the membrane proton channel (subunits c, a, 8, e, f, g, k and j). These two domains are linked by a central stalk (subunits gamma, delta, and epsilon) rotating inside the F1 region and a stationary peripheral stalk (subunits F6, b, d, and OSCP).

The protein resides in the mitochondrion. The protein localises to the mitochondrion inner membrane. Functionally, subunit b, of the mitochondrial membrane ATP synthase complex (F(1)F(0) ATP synthase or Complex V) that produces ATP from ADP in the presence of a proton gradient across the membrane which is generated by electron transport complexes of the respiratory chain. ATP synthase complex consist of a soluble F(1) head domain - the catalytic core - and a membrane F(1) domain - the membrane proton channel. These two domains are linked by a central stalk rotating inside the F(1) region and a stationary peripheral stalk. During catalysis, ATP synthesis in the catalytic domain of F(1) is coupled via a rotary mechanism of the central stalk subunits to proton translocation. In vivo, can only synthesize ATP although its ATP hydrolase activity can be activated artificially in vitro. Part of the complex F(0) domain. Part of the complex F(0) domain and the peripheric stalk, which acts as a stator to hold the catalytic alpha(3)beta(3) subcomplex and subunit a/ATP6 static relative to the rotary elements. The polypeptide is ATP synthase peripheral stalk subunit b, mitochondrial (Pongo abelii (Sumatran orangutan)).